The following is a 163-amino-acid chain: Phosphopantetheine adenylyltransferase (163 aa).

Serine 8 provides a ligand contact to substrate. Residues 8-9 (SF) and histidine 16 each bind ATP. Substrate-binding residues include lysine 40, threonine 72, and arginine 86. ATP contacts are provided by residues 87-89 (GLR), glutamate 97, and 122-128 (HSFLSSS).

The protein belongs to the bacterial CoaD family. As to quaternary structure, homohexamer. The cofactor is Mg(2+).

The protein resides in the cytoplasm. It catalyses the reaction (R)-4'-phosphopantetheine + ATP + H(+) = 3'-dephospho-CoA + diphosphate. The protein operates within cofactor biosynthesis; coenzyme A biosynthesis; CoA from (R)-pantothenate: step 4/5. In terms of biological role, reversibly transfers an adenylyl group from ATP to 4'-phosphopantetheine, yielding dephospho-CoA (dPCoA) and pyrophosphate. The polypeptide is Phosphopantetheine adenylyltransferase (Synechococcus sp. (strain CC9902)).